A 161-amino-acid chain; its full sequence is Nucleotide-binding protein Bd0338 (161 aa).

This sequence belongs to the YajQ family.

Its function is as follows. Nucleotide-binding protein. The protein is Nucleotide-binding protein Bd0338 of Bdellovibrio bacteriovorus (strain ATCC 15356 / DSM 50701 / NCIMB 9529 / HD100).